Consider the following 350-residue polypeptide: Glycogenin-1 (350 aa).

Threonine 2 carries the N-acetylthreonine modification. UDP contacts are provided by leucine 9, threonine 11, asparagine 12, and tyrosine 15. 4 residues coordinate UDP-alpha-D-glucose: leucine 9, threonine 11, asparagine 12, and tyrosine 15. The residue at position 44 (serine 44) is a Phosphoserine. Arginine 77 contributes to the UDP binding site. The UDP-alpha-D-glucose site is built by arginine 77, lysine 86, aspartate 102, alanine 103, aspartate 104, asparagine 133, serine 134, aspartate 160, aspartate 163, and glutamine 164. The UDP site is built by aspartate 102, alanine 103, and aspartate 104. Residue aspartate 102 coordinates Mn(2+). Position 104 (aspartate 104) interacts with Mn(2+). Tyrosine 195 is a glycosylation site (O-linked (Glc...) tyrosine). The UDP site is built by histidine 212, glycine 215, and lysine 218. Histidine 212 provides a ligand contact to Mn(2+). UDP-alpha-D-glucose is bound by residues glycine 215 and lysine 218. An interaction with GYS1 region spans residues 301–333; that stretch reads SHLSLGEIPAMAQPFVSSEERKERWEQGQADYM.

It belongs to the glycosyltransferase 8 family. Glycogenin subfamily. As to quaternary structure, part of the GYS1-GYG1 complex, a heterooctamer composed of a tetramer of GYS1 and 2 dimers of GYG1, where each GYS1 protomer binds to one GYG1 subunit (via GYG1 C-terminus); the GYS1 tetramer may dissociate from GYG1 dimers to continue glycogen polymerization on its own. May also form a heterooctamer complex with GYS2 (via GYG1 C-terminus). The cofactor is Mn(2+). Self-glycosylated by the transfer of glucose residues from UDP-glucose to itself, forming an alpha-1,4-glycan of around 10 residues attached to Tyr-195. In terms of processing, phosphorylated. Highly expressed in skeletal muscle and heart, with lower levels in brain, lung, kidney and pancreas.

The protein localises to the cytoplasm. It localises to the nucleus. It catalyses the reaction L-tyrosyl-[glycogenin] + UDP-alpha-D-glucose = alpha-D-glucosyl-L-tyrosyl-[glycogenin] + UDP + H(+). The catalysed reaction is [1,4-alpha-D-glucosyl](n)-L-tyrosyl-[glycogenin] + UDP-alpha-D-glucose = [1,4-alpha-D-glucosyl](n+1)-L-tyrosyl-[glycogenin] + UDP + H(+). It functions in the pathway glycan biosynthesis; glycogen biosynthesis. Its activity is regulated as follows. Inhibited by palladium ions. Glycogenin participates in the glycogen biosynthetic process along with glycogen synthase and glycogen branching enzyme. It catalyzes the formation of a short alpha (1,4)-glucosyl chain covalently attached via a glucose 1-O-tyrosyl linkage to internal tyrosine residues and these chains act as primers for the elongation reaction catalyzed by glycogen synthase. The chain is Glycogenin-1 from Homo sapiens (Human).